The following is a 392-amino-acid chain: Cobalt-precorrin-5B C(1)-methyltransferase (392 aa).

It belongs to the CbiD family.

The enzyme catalyses Co-precorrin-5B + S-adenosyl-L-methionine = Co-precorrin-6A + S-adenosyl-L-homocysteine. Its pathway is cofactor biosynthesis; adenosylcobalamin biosynthesis; cob(II)yrinate a,c-diamide from sirohydrochlorin (anaerobic route): step 6/10. Functionally, catalyzes the methylation of C-1 in cobalt-precorrin-5B to form cobalt-precorrin-6A. The polypeptide is Cobalt-precorrin-5B C(1)-methyltransferase (Pelobacter propionicus (strain DSM 2379 / NBRC 103807 / OttBd1)).